A 501-amino-acid chain; its full sequence is E3 ubiquitin-protein ligase TRIM35 (501 aa).

Met1 is modified (N-acetylmethionine). Ser8 is modified (phosphoserine). The segment at 21 to 61 (CAVCYDPFRDAVTLRCGHNFCRRCVSGCWEVQTTPSCPVCK) adopts an RING-type zinc-finger fold. A B box-type zinc finger spans residues 96–137 (RSPRPCRAHRAPLTLFCVEDKELLCCACQADARHQEHRVQPI). Positions 101, 104, 123, and 129 each coordinate Zn(2+). A coiled-coil region spans residues 209 to 252 (MKEESRKKHLLAEEKMKQLAEQTEALAREIERLQMEMKEDDMTF). One can recognise a B30.2/SPRY domain in the interval 284–495 (LESLQYRVWK…LRICHLRVSI (212 aa)).

In terms of assembly, interacts with PKM isoform M2, but not isoform M1; this interaction may compete with that between PKM and FGFR1, and hence reduces FGFR1-dependent tyrosine phosphorylation of PKM. Interacts with IRF7; this interaction promotes IRF7 proteasomal degradation. Interacts with TRAF3; this interaction promotes TRAF3 activation.

The protein resides in the cytoplasm. It is found in the nucleus. It carries out the reaction S-ubiquitinyl-[E2 ubiquitin-conjugating enzyme]-L-cysteine + [acceptor protein]-L-lysine = [E2 ubiquitin-conjugating enzyme]-L-cysteine + N(6)-ubiquitinyl-[acceptor protein]-L-lysine.. The protein operates within protein modification; protein ubiquitination. Functionally, E3 ubiquitin-protein ligase that participates in multiple biological processes including cell death, glucose metabolism, and in particular, the innate immune response. Mediates 'Lys-63'-linked polyubiquitination of TRAF3 thereby promoting type I interferon production via RIG-I signaling pathway. Can also catalyze 'Lys-48'-linked polyubiquitination and proteasomal degradation of viral proteins such as influenza virus PB2. Acts as a negative feedback regulator of TLR7- and TLR9-triggered signaling. Mechanistically, promotes the 'Lys-48'-linked ubiquitination of IRF7 and induces its degradation via a proteasome-dependent pathway. Reduces FGFR1-dependent tyrosine phosphorylation of PKM, inhibiting PKM-dependent lactate production, glucose metabolism, and cell growth. This is E3 ubiquitin-protein ligase TRIM35 (Trim35) from Rattus norvegicus (Rat).